A 473-amino-acid chain; its full sequence is B box and SPRY domain-containing protein (473 aa).

The interval 1–69 (MSADVSGTES…PKQGSERSQL (69 aa)) is disordered. Residues 35 to 51 (KPGPGPEPRPESGPEPG) are compositionally biased toward pro residues. The segment at 65-113 (ERSQLCPEHFEPLSWFCLSERRPVCATCAGFGGRCHRHRIRRAEEHAEE) adopts a B box-type zinc-finger fold. A B30.2/SPRY domain is found at 259-455 (SPLLTQLWAA…ISIVRGPLAT (197 aa)).

In terms of assembly, interacts with YWHAZ/14-3-3 protein zeta. Interacts with TRPV5 and TRPV6. In terms of tissue distribution, according to PubMed:10978534, testis-specific. According to PubMed:16371431, broadly expressed.

It localises to the cytoplasm. The protein localises to the membrane. In terms of biological role, may regulate epithelial calcium transport by inhibiting TRPV5 activity. This chain is B box and SPRY domain-containing protein (Bspry), found in Mus musculus (Mouse).